Here is a 1876-residue protein sequence, read N- to C-terminus: Phenolphthiocerol/phthiocerol polyketide synthase subunit A (1876 aa).

The region spanning alanine 9–glutamate 83 is the Carrier 1 domain. Serine 43 is modified (O-(pantetheine 4'-phosphoryl)serine). Residues aspartate 101 to glutamine 526 form the Ketosynthase family 3 (KS3) domain. Active-site for beta-ketoacyl synthase activity residues include cysteine 273, histidine 408, and histidine 448. The segment at glutamate 624–proline 950 is acyltransferase. Serine 720 serves as the catalytic For malonyltransferase activity. An N-terminal hotdog fold region spans residues histidine 997 to serine 1112. The 271-residue stretch at histidine 997–valine 1267 folds into the PKS/mFAS DH domain. The active-site Proton acceptor; for dehydratase activity is the histidine 1027. The disordered stretch occupies residues glutamine 1104–alanine 1130. Residues serine 1106–serine 1115 are compositionally biased toward low complexity. The interval alanine 1130–valine 1267 is C-terminal hotdog fold. Residue aspartate 1186 is the Proton donor; for dehydratase activity of the active site. A beta-ketoacyl reductase region spans residues alanine 1491–valine 1728. Residue alanine 1492–leucine 1551 coordinates NADP(+). Residues glutamate 1759–valine 1836 enclose the Carrier 2 domain. Residue serine 1796 is modified to O-(pantetheine 4'-phosphoryl)serine.

It depends on NADP(+) as a cofactor. The cofactor is pantetheine 4'-phosphate.

It catalyses the reaction icosanoyl-[(phenol)carboxyphthiodiolenone synthase] + 2 (S)-methylmalonyl-CoA + 3 malonyl-CoA + 5 NADPH + 10 H(+) = C32-carboxyphthiodiolenone-[(phenol)carboxyphthiodiolenone synthase] + 5 CO2 + 5 NADP(+) + 5 CoA + 2 H2O. The catalysed reaction is docosanoyl-[(phenol)carboxyphthiodiolenone synthase] + 2 (S)-methylmalonyl-CoA + 3 malonyl-CoA + 5 NADPH + 10 H(+) = C34-carboxyphthiodiolenone-[(phenol)carboxyphthiodiolenone synthase] + 5 CO2 + 5 NADP(+) + 5 CoA + 2 H2O. It carries out the reaction 17-(4-hydroxyphenyl)heptadecanoyl-[(phenol)carboxyphthiodiolenone synthase] + 2 (S)-methylmalonyl-CoA + 3 malonyl-CoA + 5 NADPH + 10 H(+) = C35-(phenol)carboxyphthiodiolenone-[(phenol)carboxyphthiodiolenone synthase] + 5 CO2 + 5 NADP(+) + 5 CoA + 2 H2O. The enzyme catalyses 19-(4-hydroxyphenyl)nonadecanoyl-[(phenol)carboxyphthiodiolenone synthase] + 2 (S)-methylmalonyl-CoA + 3 malonyl-CoA + 5 NADPH + 10 H(+) = C37-(phenol)carboxyphthiodiolenone-[(phenol)carboxyphthiodiolenone synthase] + 5 CO2 + 5 NADP(+) + 5 CoA + 2 H2O. The protein operates within lipid metabolism; fatty acid biosynthesis. In terms of biological role, part of the PpsABCDE complex involved in the biosynthesis of the lipid core common to phthiocerols and phenolphthiocerols by successive additions of malonyl-CoA or methylmalonyl-CoA extender units. PpsA can accept as substrate the activated forms of either icosanoyl (C20), docosanoyl (C22) or lignoceroyl (C24) groups from FadD26, or a (4-hydroxyphenyl)-C17 or (4-hydroxyphenyl)-C19 fatty acyl from FadD29. PpsA initiates the biosynthesis and extends its substrate using a malonyl-CoA extender unit. The PpsB and PpsC proteins add the second and third malonyl-CoA extender units. PpsD adds an (R)-methylmalonyl unit and PpsE adds a second (R)-methylmalonyl unit. The incorporation of the methylmalonyl units results in formation of two branched methyl groups in the elongated product. The chain is Phenolphthiocerol/phthiocerol polyketide synthase subunit A (ppsA) from Mycobacterium bovis (strain ATCC BAA-935 / AF2122/97).